We begin with the raw amino-acid sequence, 254 residues long: Small ribosomal subunit protein uS2 (254 aa).

Belongs to the universal ribosomal protein uS2 family.

The protein is Small ribosomal subunit protein uS2 of Borrelia recurrentis (strain A1).